The primary structure comprises 112 residues: Large ribosomal subunit protein P2-B (112 aa).

The tract at residues 89 to 112 (APAAADAKKEEEEEDDDMGFGLFD) is disordered.

This sequence belongs to the eukaryotic ribosomal protein P1/P2 family. In terms of assembly, P1 and P2 exist as dimers at the large ribosomal subunit. Phosphorylated.

Plays an important role in the elongation step of protein synthesis. The polypeptide is Large ribosomal subunit protein P2-B (Trypanosoma cruzi).